The sequence spans 598 residues: uncharacterized protein (598 aa).

Residues 39–322 (LIMVFVFVTV…LSNQFNMIQM (284 aa)) enclose the ABC transmembrane type-1 domain. 5 helical membrane passes run 40 to 60 (IMVF…PYLI), 80 to 100 (MLIL…QGKI), 150 to 170 (VLGN…GAVI), 177 to 197 (VILS…TQIV), and 273 to 293 (LGFA…IITV). One can recognise an ABC transporter domain in the interval 355-589 (IEFKNVWFSY…RGFYYELFTS (235 aa)). ATP is bound at residue 388–395 (GPTGSGKT).

Belongs to the ABC transporter superfamily.

It is found in the cell membrane. This is an uncharacterized protein from Thermotoga maritima (strain ATCC 43589 / DSM 3109 / JCM 10099 / NBRC 100826 / MSB8).